The chain runs to 152 residues: Atypical leghemoglobin 2-1 (152 aa).

Residues Thr-3–Ser-152 form the Globin domain. Position 31 is a nitrated tyrosine (Tyr-31). Ser-46 serves as a coordination point for heme b. Residue Ser-46 is modified to Phosphoserine. His-64 provides a ligand contact to O2. Residues Lys-67, His-99, and Arg-102 each coordinate heme b. Tyr-140 carries the post-translational modification Nitrated tyrosine.

It belongs to the plant globin family. In terms of assembly, monomer. Post-translationally, nitrated in effective nodules and particularly in hypoxic conditions; this mechanism may play a protective role in the symbiosis by buffering toxic peroxynitrite NO(2)(-). Nitration level decrease during nodule senescence. Phosphorylation at Ser-46 disrupts the molecular environment of its porphyrin ring oxygen binding pocket, thus leading to a reduced oxygen consumption and to the delivery of oxygen O(2) to symbiosomes. As to expression, mainly expressed in leaves and, at low levels, in roots of non-nodulated plants. However, accumulates also in nodules and roots, and, to a lower extent, in leaves, stems, flowers and fruits, in nodulated plants.

Functionally, atypical leghemoglobin that reversibly binds oxygen O(2) through a pentacoordinated heme iron. In nodules, facilitates the diffusion of oxygen to the bacteroids while preventing the bacterial nitrogenase from being inactivated by buffering dioxygen, nitric oxide and carbon monoxide. This role is essential for symbiotic nitrogen fixation (SNF). Seems not restricted to symbiotic nitrogen fixation and root nodules formation, but also contributes to general plant development and metabolism. This Lotus japonicus (Lotus corniculatus var. japonicus) protein is Atypical leghemoglobin 2-1.